Reading from the N-terminus, the 342-residue chain is MESIAKAKSLPNKGRTYDSQRPWNRDSPFSFAAWWSTPSTRYLKVDQPSGRDEHDSLDLEDEDVSKYLASHRERQKRRASCAAKAKVLIIGCAVISLFAIIGALGFALGRRATLPGSCASPAHQNPHTPPHPRPTKGEAHDAGHSGSHSSSSSTNNHHHSHDDSPPPPHVGIDKPKQCGESPDEAQSRGCIFEPQLTAWVAPECAFPAVVAEYQDAVGDMMTEWPWFWDTGLQKAVSPEEFPSLQAGNYSVVYTPYQASHALHCLYCWRKVSYALEHGVDWMDARCHQFYHQRHCAFFIADKLLEMEDWRAAAEVDVQGRLTTWTYPLLYHNCVPLSSTMES.

A disordered region spans residues 1-22 (MESIAKAKSLPNKGRTYDSQRP). Residues 87–107 (VLIIGCAVISLFAIIGALGFA) traverse the membrane as a helical segment. The tract at residues 118-186 (CASPAHQNPH…QCGESPDEAQ (69 aa)) is disordered. The segment covering 144–155 (HSGSHSSSSSTN) has biased composition (low complexity). A glycan (N-linked (GlcNAc...) asparagine) is linked at N248.

It is found in the membrane. Functionally, part of the gene cluster that mediates the biosynthesis of the phomopsins, a group of hexapeptide mycotoxins which infects lupins and causes lupinosis disease in livestock. The role of phomB within the phomopsins biosynthesis pathway has still to be determined. The pathway starts with the processing of the precursor phomA by several endopeptidases including kexin proteases as well as the cluster-specific S41 family peptidase phomP1 and the oligopeptidase phomG to produce 10 identical copies of the hexapeptide Tyr-Val-Ile-Pro-Ile-Asp. After being excised from the precursor peptide, the core peptides are cyclized and modified post-translationally by enzymes encoded within the gene cluster. The timing and order of proteolysis of the phomA precursor and PTMs are still unknown. Two tyrosinase-like enzymes, phomQ1 and phomQ2, catalyze the chlorination and hydroxylation of Tyr, respectively. PhomYb, is proposed to be involved in the construction of the macrocyclic structure. The other 4 ustYa family proteins may be involved in PTMs that generate the unique structure of phomopsin A. PhomYa is required for the hydroxylation of C-beta of Tyr. PhomYc, phomYd, and phomYe are responsible for the biosynthesis of 2,3-dehydroisoleucine (dIle), 2,3-dehydroaspartic acid (dAsp), and 3,4-dehydroproline (dPro), respectively. While dIle formation by phomYc is indispensable for the installation of dAsp by phomYd, the order of the other PTMs have not been elucidated yet. Most of the biosynthetic enzymes likely have broad substrate specificity, and thus, there might be a metabolic grid from a precursor to phomopsin A. The enzyme(s) responsible for the biosynthesis of 3,4-dehydrovaline (dVal) have also not been identified yet. Finally, phomM acts as an S-adenosylmethionine-dependent alpha-N-methyltransferase that catalyzes two successive N-methylation reactions, converting N-desmethyl-phomopsin A to phomopsin A and phomopsin A further to an N,N-dimethylated congener called phomopsin E. This chain is Phomopsin biosynthesis cluster protein B, found in Diaporthe leptostromiformis (Lupinosis disease fungus).